Here is a 428-residue protein sequence, read N- to C-terminus: Cyclin-B1-1 (428 aa).

It belongs to the cyclin family. Cyclin AB subfamily. In terms of assembly, interacts with FZR2/CCS52A1, FZR1/CCS52A2 and FZR3/CCS52B. Expressed in root tip, lateral root apex, shoot apex, leaf primordia, axillary buds, stamen and petal primordia, ovules and developing embryo.

It is found in the nucleus. This chain is Cyclin-B1-1 (CYCB1-1), found in Arabidopsis thaliana (Mouse-ear cress).